Consider the following 372-residue polypeptide: Protein RecA (372 aa).

81 to 88 (GPESSGKT) is an ATP binding site.

Belongs to the RecA family.

Its subcellular location is the cytoplasm. Functionally, can catalyze the hydrolysis of ATP in the presence of single-stranded DNA, the ATP-dependent uptake of single-stranded DNA by duplex DNA, and the ATP-dependent hybridization of homologous single-stranded DNAs. It interacts with LexA causing its activation and leading to its autocatalytic cleavage. This is Protein RecA from Haemophilus ducreyi (strain 35000HP / ATCC 700724).